The sequence spans 562 residues: Glutamine--tRNA ligase (562 aa).

A 'HIGH' region motif is present at residues 35–45 (PEPNGYLHIGH). ATP is bound by residues 36–38 (EPN) and 42–48 (HIGHAKS). Residues Asp68 and Tyr213 each contribute to the L-glutamine site. ATP contacts are provided by residues Thr232 and 264 to 265 (RL). The short motif at 271-275 (ITSKR) is the 'KMSKS' region element.

Belongs to the class-I aminoacyl-tRNA synthetase family. As to quaternary structure, monomer.

The protein resides in the cytoplasm. It catalyses the reaction tRNA(Gln) + L-glutamine + ATP = L-glutaminyl-tRNA(Gln) + AMP + diphosphate. The protein is Glutamine--tRNA ligase of Neisseria gonorrhoeae (strain ATCC 700825 / FA 1090).